A 329-amino-acid polypeptide reads, in one-letter code: Probable alpha-1,2-galactosyltransferase gmh1 (329 aa).

Residues 1-14 lie on the Cytoplasmic side of the membrane; it reads MLSFFTKNTLTKRK. A helical; Signal-anchor for type II membrane protein transmembrane segment spans residues 15–35; it reads LIMLALAIVFTFFAFGLYFIP. Residues 36–329 lie on the Lumenal side of the membrane; it reads HDEISVFDFK…LWTKYKDKII (294 aa). Residues Asn-127 and Asn-169 are each glycosylated (N-linked (GlcNAc...) asparagine).

The protein belongs to the glycosyltransferase 34 family.

It is found in the golgi apparatus membrane. The sequence is that of Probable alpha-1,2-galactosyltransferase gmh1 (gmh1) from Schizosaccharomyces pombe (strain 972 / ATCC 24843) (Fission yeast).